We begin with the raw amino-acid sequence, 267 residues long: MADS-box transcription factor 15 (267 aa).

Positions 1–61 constitute an MADS-box domain; the sequence is MGRGKVQLKR…GKLYEYATDS (61 aa). Positions 88–178 constitute a K-box domain; the sequence is EGNWCHEYRK…QKELVERQKN (91 aa). Residues 179–215 form a disordered region; it reads VRGQQQVGQWDQTQVQAQAQAQPQAQTSSSSSSMLRD. A compositionally biased stretch (low complexity) spans 182-215; that stretch reads QQQVGQWDQTQVQAQAQAQPQAQTSSSSSSMLRD.

May interact with the K-box of MADS1 and MADS6.

It is found in the nucleus. In terms of biological role, probable transcription factor. In Oryza sativa subsp. japonica (Rice), this protein is MADS-box transcription factor 15 (MADS15).